A 434-amino-acid chain; its full sequence is Isocitrate lyase (434 aa).

Position 91-93 (91-93 (SGW)) interacts with substrate. Aspartate 157 is a Mg(2+) binding site. The Proton acceptor role is filled by cysteine 195. Substrate contacts are provided by residues 196–197 (GH), arginine 232, 317–321 (NCSPS), and threonine 351.

Belongs to the isocitrate lyase/PEP mutase superfamily. Isocitrate lyase family. Homotetramer. Mg(2+) serves as cofactor.

The enzyme catalyses D-threo-isocitrate = glyoxylate + succinate. Its pathway is carbohydrate metabolism; glyoxylate cycle; (S)-malate from isocitrate: step 1/2. Functionally, involved in the metabolic adaptation in response to environmental changes. Catalyzes the reversible formation of succinate and glyoxylate from isocitrate, a key step of the glyoxylate cycle, which operates as an anaplerotic route for replenishing the tricarboxylic acid cycle during growth on fatty acid substrates. The chain is Isocitrate lyase (aceA) from Salmonella typhimurium (strain LT2 / SGSC1412 / ATCC 700720).